The chain runs to 120 residues: Large ribosomal subunit protein uL18 (120 aa).

The protein belongs to the universal ribosomal protein uL18 family. Part of the 50S ribosomal subunit; part of the 5S rRNA/L5/L18 subcomplex. In B.stearothermophilus only 2 proteins, L5 and L18 have been shown to be part of this subcomplex, unlike the case in E.coli and T.thermophilus where L25 (TL5) is also found. Post-translationally, the protein, when overexpressed in E.coli, contains a phosphoserine, which is required for the protein to bind to 5S rRNA. It has been suggested, based solely on amino acid conservation, that this occurs on Ser-57.

Its function is as follows. This is one of the proteins that bind and probably mediate the attachment of the 5S RNA into the large ribosomal subunit, where it forms part of the central protuberance. The chain is Large ribosomal subunit protein uL18 (rplR) from Geobacillus stearothermophilus (Bacillus stearothermophilus).